The sequence spans 614 residues: Probable LRR receptor-like serine/threonine-protein kinase At5g45780 (614 aa).

A signal peptide spans 1-26; it reads MEISLMKFLFLGIWVYYYSVLDSVSA. The Extracellular segment spans residues 27-242; that stretch reads MDSLLSPKGV…NSKHHSLVLS (216 aa). 4 LRR repeats span residues 104–126, 128–151, 152–174, and 176–197; these read HLHT…LGQL, ELET…GFLT, HLNY…VAGL, and GLSF…ISAK. 3 N-linked (GlcNAc...) asparagine glycosylation sites follow: N186, N193, and N224. Residues 243-263 traverse the membrane as a helical segment; sequence FAFGIVVAFIISLMFLFFWVL. The Cytoplasmic segment spans residues 264 to 614; that stretch reads WHRSRLSRSH…IEAIELSGPR (351 aa). T297 carries the post-translational modification Phosphothreonine. The region spanning 300 to 576 is the Protein kinase domain; sequence FSPKNILGQG…QVLKVLEGLV (277 aa). Position 306–314 (306–314) interacts with ATP; sequence LGQGGFGMV. T323 carries the post-translational modification Phosphothreonine. K328 lines the ATP pocket. Phosphoserine is present on S380. The active-site Proton acceptor is the D426. Phosphothreonine is present on residues T459, T460, and T465. Y473 is modified (phosphotyrosine). The residue at position 475 (S475) is a Phosphoserine. At T476 the chain carries Phosphothreonine. Position 480 is a phosphoserine (S480). T555 is modified (phosphothreonine).

Belongs to the protein kinase superfamily. Ser/Thr protein kinase family.

The protein localises to the membrane. It catalyses the reaction L-seryl-[protein] + ATP = O-phospho-L-seryl-[protein] + ADP + H(+). The enzyme catalyses L-threonyl-[protein] + ATP = O-phospho-L-threonyl-[protein] + ADP + H(+). The chain is Probable LRR receptor-like serine/threonine-protein kinase At5g45780 from Arabidopsis thaliana (Mouse-ear cress).